A 496-amino-acid chain; its full sequence is MDCYRTSLSSSWIYPTVILCLFGFFSMMRPSEPFLIPYLSGPDKNLTSAEITNEIFPVWTYSYLVLLLPVFVLTDYVRYKPVIILQGISFIITWLLLLFGQGVKTMQVVEFFYGMVTAAEVAYYAYIYSVVSPEHYQRVSGYCRSVTLAAYTAGSVLAQLLVSLANMSYFYLNVISLASVSVAFLFSLFLPMPKKSMFFHAKPSREIKKSSSVNPVLEETHEGEAPGCEEQKPTSEILSTSGKLNKGQLNSLKPSNVTVDVFVQWFQDLKECYSSKRLFYWSLWWAFATAGFNQVLNYVQILWDYKAPSQDSSIYNGAVEAIATFGGAVAAFAVGYVKVNWDLLGELALVVFSVVNAGSLFLMHYTANIWACYAGYLIFKSSYMLLITIAVFQIAVNLNVERYALVFGINTFIALVIQTIMTVIVVDQRGLNLPVSIQFLVYGSYFAVIAGIFLMRSMYITYSTKSQKDVQSPAPSENPDVSHPEEESNIIMSTKL.

The Cytoplasmic segment spans residues 1-7; sequence MDCYRTS. The helical transmembrane segment at 8 to 28 threads the bilayer; that stretch reads LSSSWIYPTVILCLFGFFSMM. The Extracellular segment spans residues 29 to 53; sequence RPSEPFLIPYLSGPDKNLTSAEITN. A glycan (N-linked (GlcNAc...) asparagine) is linked at asparagine 45. A helical membrane pass occupies residues 54 to 74; it reads EIFPVWTYSYLVLLLPVFVLT. Over 75 to 81 the chain is Cytoplasmic; the sequence is DYVRYKP. The helical transmembrane segment at 82–102 threads the bilayer; it reads VIILQGISFIITWLLLLFGQG. The Extracellular portion of the chain corresponds to 103–110; that stretch reads VKTMQVVE. The helical transmembrane segment at 111–131 threads the bilayer; the sequence is FFYGMVTAAEVAYYAYIYSVV. Residues 132–144 are Cytoplasmic-facing; sequence SPEHYQRVSGYCR. The chain crosses the membrane as a helical span at residues 145-165; sequence SVTLAAYTAGSVLAQLLVSLA. Asparagine 166 carries N-linked (GlcNAc...) asparagine glycosylation. At 166 to 169 the chain is on the extracellular side; it reads NMSY. The helical transmembrane segment at 170-190 threads the bilayer; the sequence is FYLNVISLASVSVAFLFSLFL. At 191 to 282 the chain is on the cytoplasmic side; it reads PMPKKSMFFH…YSSKRLFYWS (92 aa). Residues 283–303 traverse the membrane as a helical segment; sequence LWWAFATAGFNQVLNYVQILW. The Extracellular segment spans residues 304–316; that stretch reads DYKAPSQDSSIYN. The chain crosses the membrane as a helical span at residues 317–337; sequence GAVEAIATFGGAVAAFAVGYV. Residues 338-342 lie on the Cytoplasmic side of the membrane; the sequence is KVNWD. Residues 343–363 form a helical membrane-spanning segment; it reads LLGELALVVFSVVNAGSLFLM. Residues 364–375 are Extracellular-facing; sequence HYTANIWACYAG. The chain crosses the membrane as a helical span at residues 376-396; the sequence is YLIFKSSYMLLITIAVFQIAV. The Cytoplasmic segment spans residues 397-405; that stretch reads NLNVERYAL. The chain crosses the membrane as a helical span at residues 406-426; the sequence is VFGINTFIALVIQTIMTVIVV. Over 427 to 434 the chain is Extracellular; sequence DQRGLNLP. Residues 435–455 form a helical membrane-spanning segment; that stretch reads VSIQFLVYGSYFAVIAGIFLM. Over 456 to 496 the chain is Cytoplasmic; sequence RSMYITYSTKSQKDVQSPAPSENPDVSHPEEESNIIMSTKL. Positions 468–496 are disordered; that stretch reads KDVQSPAPSENPDVSHPEEESNIIMSTKL.

The protein belongs to the reduced folate carrier (RFC) transporter (TC 2.A.48) family. In terms of tissue distribution, widely expressed but most abundant in placenta, kidney and liver.

It is found in the membrane. It catalyses the reaction thiamine(out) + H(+)(in) = thiamine(in) + H(+)(out). It carries out the reaction pyridoxine(out) + n H(+)(out) = pyridoxine(in) + n H(+)(in). With respect to regulation, pyridoxine transport is inhibited by carbonyl cyanide p-trifluoromethoxyphenylhydrazone (FCCP) and carbonyl cyanide m-chlorophenylhydrazone (CCCP). Its function is as follows. Mediates high affinity thiamine uptake, probably via a proton anti-port mechanism. Has no folate transport activity. Mediates H(+)-dependent pyridoxine transport. The chain is Thiamine transporter 2 (SLC19A3) from Homo sapiens (Human).